The following is a 563-amino-acid chain: Arginine--tRNA ligase (563 aa).

The 'HIGH' region motif lies at 121–131 (PNIAKPFSIGH).

This sequence belongs to the class-I aminoacyl-tRNA synthetase family. In terms of assembly, monomer.

It localises to the cytoplasm. The enzyme catalyses tRNA(Arg) + L-arginine + ATP = L-arginyl-tRNA(Arg) + AMP + diphosphate. This Streptococcus pyogenes serotype M3 (strain ATCC BAA-595 / MGAS315) protein is Arginine--tRNA ligase.